Consider the following 111-residue polypeptide: Large ribosomal subunit protein uL23 (111 aa).

Belongs to the universal ribosomal protein uL23 family. In terms of assembly, part of the 50S ribosomal subunit. Contacts protein L29, and trigger factor when it is bound to the ribosome.

One of the early assembly proteins it binds 23S rRNA. One of the proteins that surrounds the polypeptide exit tunnel on the outside of the ribosome. Forms the main docking site for trigger factor binding to the ribosome. The sequence is that of Large ribosomal subunit protein uL23 from Chlamydia caviae (strain ATCC VR-813 / DSM 19441 / 03DC25 / GPIC) (Chlamydophila caviae).